The sequence spans 439 residues: UPF0229 protein Nham_0975 (439 aa).

Residues 39 to 106 are disordered; the sequence is RSGRISDADG…AGTPDPSMKD (68 aa). Over residues 58-76 the composition is skewed to basic and acidic residues; it reads STDEPRFEAAKDSGRREHV.

This sequence belongs to the UPF0229 family.

The polypeptide is UPF0229 protein Nham_0975 (Nitrobacter hamburgensis (strain DSM 10229 / NCIMB 13809 / X14)).